We begin with the raw amino-acid sequence, 329 residues long: Ribosomal RNA small subunit methyltransferase C (329 aa).

Belongs to the methyltransferase superfamily. RsmC family. As to quaternary structure, monomer.

It is found in the cytoplasm. The catalysed reaction is guanosine(1207) in 16S rRNA + S-adenosyl-L-methionine = N(2)-methylguanosine(1207) in 16S rRNA + S-adenosyl-L-homocysteine + H(+). Specifically methylates the guanine in position 1207 of 16S rRNA in the 30S particle. This Actinobacillus pleuropneumoniae serotype 5b (strain L20) protein is Ribosomal RNA small subunit methyltransferase C.